The primary structure comprises 225 residues: Ribose-5-phosphate isomerase A (225 aa).

Substrate is bound by residues 26 to 29 (TGST), 82 to 85 (DGAD), and 95 to 98 (KGGG). Catalysis depends on glutamate 104, which acts as the Proton acceptor. Residue lysine 122 coordinates substrate.

It belongs to the ribose 5-phosphate isomerase family. As to quaternary structure, homodimer.

The catalysed reaction is aldehydo-D-ribose 5-phosphate = D-ribulose 5-phosphate. Its pathway is carbohydrate degradation; pentose phosphate pathway; D-ribose 5-phosphate from D-ribulose 5-phosphate (non-oxidative stage): step 1/1. In terms of biological role, catalyzes the reversible conversion of ribose-5-phosphate to ribulose 5-phosphate. This chain is Ribose-5-phosphate isomerase A, found in Streptococcus mutans serotype c (strain ATCC 700610 / UA159).